The chain runs to 553 residues: Zinc finger protein with KRAB and SCAN domains 3 (553 aa).

Residues 28 to 49 (EQEESSPLAEETSWLGSPGPDR) are disordered. Residues serine 33 and serine 44 each carry the phosphoserine modification. Residues 51-133 (RQRFRAFRYP…ALLEYLDRQL (83 aa)) form the SCAN box domain. Threonine 136 carries the post-translational modification Phosphothreonine. Lysine 176 participates in a covalent cross-link: Glycyl lysine isopeptide (Lys-Gly) (interchain with G-Cter in SUMO2). Threonine 206 is modified (phosphothreonine). The region spanning 213–273 (LKMEDVAPVL…RAEEYRDQKP (61 aa)) is the KRAB domain. Position 223 is a phosphoserine (serine 223). 5 C2H2-type zinc fingers span residues 313 to 335 (FYCR…KRIH), 341 to 363 (YECE…QRVH), 369 to 391 (YECE…QRTH), 397 to 419 (YECD…HRIH), and 425 to 447 (YQCN…QRTH). Threonine 448 is modified (phosphothreonine). C2H2-type zinc fingers lie at residues 479 to 501 (YQCN…QKVH) and 507 to 529 (FECQ…QRRH).

This sequence belongs to the krueppel C2H2-type zinc-finger protein family. In terms of tissue distribution, expressed in heart, brain, spleen, lung, liver, skeletal muscle, kidney and testis.

The protein localises to the nucleus. The protein resides in the cytoplasm. Functionally, transcriptional factor that binds to the consensus sequence 5'-[GT][AG][AGT]GGGG-3' and acts as a repressor of autophagy. Specifically represses expression of genes involved in autophagy and lysosome biogenesis/function such as MAP1LC3B, ULK1 or WIPI2. Associates with chromatin at the ITGB4 and VEGF promoters. This Mus musculus (Mouse) protein is Zinc finger protein with KRAB and SCAN domains 3 (Zkscan3).